The chain runs to 734 residues: Probable inactive histone-lysine N-methyltransferase SUVR1 (734 aa).

Positions 61–163 (QSTEKNKKEE…LPPLKRYVRR (103 aa)) are disordered. Residues 62-81 (STEKNKKEEEKKKKEEEKKS) show a composition bias toward basic and acidic residues. The span at 98 to 109 (VQDEEDDMDEDE) shows a compositional bias: acidic residues. Over residues 113–122 (KRRLRSRRGR) the composition is skewed to basic residues. Low complexity predominate over residues 123 to 132 (ASSSSSSSSS). The Zn(2+) site is built by Cys460, Cys464, Cys468, Cys477, Cys545, Cys549, Cys551, and Cys555. Residues 460–563 (CSTSCIEDCL…RCGNRVVQRG (104 aa)) enclose the Pre-SET domain. The 131-residue stretch at 566 to 696 (NKLQVFFTPN…AMEELAWDYG (131 aa)) folds into the SET domain. S-adenosyl-L-methionine-binding positions include 577–579 (KGW) and 652–653 (NH). Cys655 serves as a coordination point for Zn(2+). Tyr695 is a binding site for S-adenosyl-L-methionine. The Post-SET domain maps to 707–723 (KPFDCLCGSRFCRNKKR). Zn(2+) contacts are provided by Cys711, Cys713, and Cys718.

Belongs to the class V-like SAM-binding methyltransferase superfamily. Histone-lysine methyltransferase family. In terms of assembly, interacts with SUVR2 and itself.

It is found in the nucleus. The protein localises to the chromosome. Its function is as follows. Probable inactive histone-lysine methyltransferase that acts as regulator of transctiptional gene silencing independently of histone H3K9 methylation. Contributes to transcriptional gene silencing at RNA-directed DNA methylation (RdDM) target loci but also at RdDM-independent target loci. In Arabidopsis thaliana (Mouse-ear cress), this protein is Probable inactive histone-lysine N-methyltransferase SUVR1 (SUVR1).